The following is a 364-amino-acid chain: MKVLFAGGGTGGHLYPGVAMAAELKKRVPGISISFAGTSAGIEATEVPRLGYRLVLFPVRGLKRGLSIRALVENALILGDFAKSLSMAMALVRKEQPDVVVGTGGYVSAPLLLAAQLSGKKTLIQEQNAFPGVTTRLLARMATEVHLSFEESRKFFGGKSEVFVTGNPAREFPAESRESCLDFFGLDRSLPTLLVFGGSRGARAINNAVLKLCHRLEGTVNLIWQTGALDADRMRGEIGTSATRWIGPYIQEMGKAYGAADLVLCRAGASSLAELTNLGKPSVLIPYPYAAADHQRHNAMALVSAGASVMIDDSKIGEEASFDVILTLLRDREKLAQMGEAARREGHPGAAATLAERIIALSKS.

UDP-N-acetyl-alpha-D-glucosamine is bound by residues 10 to 12 (TGG), asparagine 128, arginine 170, serine 199, isoleucine 250, and glutamine 295.

This sequence belongs to the glycosyltransferase 28 family. MurG subfamily.

It is found in the cell inner membrane. It catalyses the reaction di-trans,octa-cis-undecaprenyl diphospho-N-acetyl-alpha-D-muramoyl-L-alanyl-D-glutamyl-meso-2,6-diaminopimeloyl-D-alanyl-D-alanine + UDP-N-acetyl-alpha-D-glucosamine = di-trans,octa-cis-undecaprenyl diphospho-[N-acetyl-alpha-D-glucosaminyl-(1-&gt;4)]-N-acetyl-alpha-D-muramoyl-L-alanyl-D-glutamyl-meso-2,6-diaminopimeloyl-D-alanyl-D-alanine + UDP + H(+). The protein operates within cell wall biogenesis; peptidoglycan biosynthesis. In terms of biological role, cell wall formation. Catalyzes the transfer of a GlcNAc subunit on undecaprenyl-pyrophosphoryl-MurNAc-pentapeptide (lipid intermediate I) to form undecaprenyl-pyrophosphoryl-MurNAc-(pentapeptide)GlcNAc (lipid intermediate II). This Chlorobaculum tepidum (strain ATCC 49652 / DSM 12025 / NBRC 103806 / TLS) (Chlorobium tepidum) protein is UDP-N-acetylglucosamine--N-acetylmuramyl-(pentapeptide) pyrophosphoryl-undecaprenol N-acetylglucosamine transferase.